Consider the following 382-residue polypeptide: Galactokinase (382 aa).

A substrate-binding site is contributed by glutamate 34–aspartate 37. An ATP-binding site is contributed by glycine 124–serine 130. Positions 130 and 162 each coordinate Mg(2+). Aspartate 174 serves as the catalytic Proton acceptor. Tyrosine 223 is a substrate binding site.

This sequence belongs to the GHMP kinase family. GalK subfamily.

The protein localises to the cytoplasm. It carries out the reaction alpha-D-galactose + ATP = alpha-D-galactose 1-phosphate + ADP + H(+). The protein operates within carbohydrate metabolism; galactose metabolism. Catalyzes the transfer of the gamma-phosphate of ATP to D-galactose to form alpha-D-galactose-1-phosphate (Gal-1-P). The protein is Galactokinase of Citrobacter koseri (strain ATCC BAA-895 / CDC 4225-83 / SGSC4696).